We begin with the raw amino-acid sequence, 246 residues long: Probable transcriptional regulatory protein GWCH70_2524 (246 aa).

It belongs to the TACO1 family.

The protein localises to the cytoplasm. The polypeptide is Probable transcriptional regulatory protein GWCH70_2524 (Geobacillus sp. (strain WCH70)).